Reading from the N-terminus, the 158-residue chain is Arginine repressor (158 aa).

Belongs to the ArgR family.

It localises to the cytoplasm. It participates in amino-acid biosynthesis; L-arginine biosynthesis [regulation]. Regulates arginine biosynthesis genes. The sequence is that of Arginine repressor from Anaeromyxobacter sp. (strain Fw109-5).